A 195-amino-acid chain; its full sequence is Imidazoleglycerol-phosphate dehydratase (195 aa).

It belongs to the imidazoleglycerol-phosphate dehydratase family.

It is found in the cytoplasm. It carries out the reaction D-erythro-1-(imidazol-4-yl)glycerol 3-phosphate = 3-(imidazol-4-yl)-2-oxopropyl phosphate + H2O. It functions in the pathway amino-acid biosynthesis; L-histidine biosynthesis; L-histidine from 5-phospho-alpha-D-ribose 1-diphosphate: step 6/9. The protein is Imidazoleglycerol-phosphate dehydratase of Ruegeria pomeroyi (strain ATCC 700808 / DSM 15171 / DSS-3) (Silicibacter pomeroyi).